Here is an 805-residue protein sequence, read N- to C-terminus: U-box domain-containing protein 70 (805 aa).

7 TPR repeats span residues 15 to 48 (ARRE…DPRD), 49 to 82 (ISFL…GREL), 90 to 127 (ARAL…HYSE), 129 to 153 (TLAK…DQEA), 154 to 187 (ADHH…NPKD), 189 to 221 (RVFS…DPTF), and 222 to 255 (LKGY…DPNN). The interval 136 to 160 (AEEARKEIEERERLDQEAADHHRDR) is disordered. Residues 341–417 (RKETEESLSR…VREVEELRQK (77 aa)) are a coiled coil. Residues 445–711 (FSNSLKIGEG…GEVWAIVEAI (267 aa)) form the Protein kinase domain. Residues 451–459 (IGEGGFGCV) and Lys472 contribute to the ATP site. Asp567 serves as the catalytic Proton acceptor. Residues 730 to 804 (SPPSYFICPI…QEWLQQHSMS (75 aa)) form the U-box domain.

The protein belongs to the protein kinase superfamily. Ser/Thr protein kinase family. Interacts with MODD.

The enzyme catalyses L-seryl-[protein] + ATP = O-phospho-L-seryl-[protein] + ADP + H(+). It carries out the reaction L-threonyl-[protein] + ATP = O-phospho-L-threonyl-[protein] + ADP + H(+). It catalyses the reaction S-ubiquitinyl-[E2 ubiquitin-conjugating enzyme]-L-cysteine + [acceptor protein]-L-lysine = [E2 ubiquitin-conjugating enzyme]-L-cysteine + N(6)-ubiquitinyl-[acceptor protein]-L-lysine.. The protein operates within protein modification; protein ubiquitination. Its function is as follows. Functions as an E3 ubiquitin ligase. Is recruited by MODD to promote ubiquitination of BZIP46, a positive regulator of abscisic acid (ABA) signaling and drought stress tolerance. This chain is U-box domain-containing protein 70, found in Oryza sativa subsp. japonica (Rice).